The primary structure comprises 266 residues: Primer terminal protein (266 aa).

Residues methionine 1–methionine 73 are disordered. A Nuclear localization signal motif is present at residues lysine 25–lysine 34. Residues arginine 74–proline 172 form an intermediate; makes extensive contacts with the phage DNA polymerase region. The stretch at alanine 86–lysine 113 forms a coiled coil. Positions glutamine 173 to phenylalanine 266 are priming. Serine 232 is modified (O-(5'-phospho-DNA)-serine). Residues arginine 256–aspartate 258 are interaction with the viral DNA polymerase.

This sequence belongs to the phi29likevirus DNA terminal protein family. As to quaternary structure, interacts with the viral polymerase; this interaction allows the initiation of TP-primed DNA replication at both viral DNA ends. Binds to ssDNA. Interacts with the replication protein p1. Part of a DNA-gp3-gp16 complex.

It localises to the virion. It is found in the host nucleus. Acts as a primer for DNA elongation during viral genomic replication. Acts as the small terminase protein during packaging. Recruits the phage DNA polymerase to the bacterial nucleoid. Primer terminal protein (TP) is covalently linked to the 5'-ends of both strands of the genome through a phosphodiester bond between the beta-hydroxyl group of a serine residue and the 5'-phosphate of the terminal deoxyadenylate (dAMP). To start replication, the DNA polymerase forms a heterodimer with a free TP that recognizes the replication origins at both 5' ends of the linear chromosome, and initiates replication using as primer the OH-group of Ser-232 of the TP. Since the polymerase initiates the replication on the second thymine, the TP-dAMP initiation product slides backwards to recover the template information of the first nucleotide. Its function is as follows. Hydrolyzes host peptidoglycans during virus entry. The polypeptide is Primer terminal protein (3) (Bacillus phage phi29 (Bacteriophage phi-29)).